A 30-amino-acid chain; its full sequence is Ornithine carbamoyltransferase (30 aa).

This sequence belongs to the aspartate/ornithine carbamoyltransferase superfamily. OTCase family.

It is found in the cytoplasm. It catalyses the reaction carbamoyl phosphate + L-ornithine = L-citrulline + phosphate + H(+). It functions in the pathway amino-acid biosynthesis; L-arginine biosynthesis; L-arginine from L-ornithine and carbamoyl phosphate: step 1/3. In terms of biological role, has vitronectin and fibronectin-binding activity. In Staphylococcus epidermidis, this protein is Ornithine carbamoyltransferase (argF).